Here is a 507-residue protein sequence, read N- to C-terminus: Cytochrome P450 4X1 (507 aa).

Residues 14–34 (LHLALVFCLALVLMQAVKLYL) traverse the membrane as a helical segment. Cysteine 452 serves as a coordination point for heme.

The protein belongs to the cytochrome P450 family. It depends on heme as a cofactor. In terms of tissue distribution, expressed at high levels in brain, mainly in neurons in different regions, including brain stem, hippocampus, cortex and cerebellum. Also expressed in cerebral vasculature. Not detected in kidney, nor liver.

The protein resides in the endoplasmic reticulum membrane. It is found in the microsome membrane. The catalysed reaction is N-(5Z,8Z,11Z,14Z-eicosatetraenoyl)-ethanolamine + reduced [NADPH--hemoprotein reductase] + O2 = N-(14,15-epoxy-5Z,8Z,11Z-eicosatrienoyl)-ethanolamine + oxidized [NADPH--hemoprotein reductase] + H2O + H(+). Its function is as follows. A cytochrome P450 monooxygenase that selectively catalyzes the epoxidation of the last double bond of the arachidonoyl moiety of anandamide, potentially modulating endocannabinoid signaling. Has no hydroxylase activity toward various fatty acids, steroids and prostaglandins. Mechanistically, uses molecular oxygen inserting one oxygen atom into a substrate, and reducing the second into a water molecule, with two electrons provided by NADPH via cytochrome P450 reductase (CPR; NADPH-ferrihemoprotein reductase). This is Cytochrome P450 4X1 from Rattus norvegicus (Rat).